The sequence spans 259 residues: Phosphate import ATP-binding protein PstB 1 (259 aa).

Residues 13 to 254 (IETKDVDLFY…PAEKETEDYI (242 aa)) enclose the ABC transporter domain. 45 to 52 (GPSGCGKS) contributes to the ATP binding site.

It belongs to the ABC transporter superfamily. Phosphate importer (TC 3.A.1.7) family. The complex is composed of two ATP-binding proteins (PstB), two transmembrane proteins (PstC and PstA) and a solute-binding protein (PstS).

Its subcellular location is the cell membrane. The catalysed reaction is phosphate(out) + ATP + H2O = ADP + 2 phosphate(in) + H(+). Part of the ABC transporter complex PstSACB involved in phosphate import. Responsible for energy coupling to the transport system. This Listeria innocua serovar 6a (strain ATCC BAA-680 / CLIP 11262) protein is Phosphate import ATP-binding protein PstB 1.